A 269-amino-acid chain; its full sequence is Monofunctional glycosyltransferase (269 aa).

A helical membrane pass occupies residues 46 to 66 (ILLTILIIIALFIGIMYFLST).

This sequence belongs to the glycosyltransferase 51 family.

The protein resides in the cell membrane. The enzyme catalyses [GlcNAc-(1-&gt;4)-Mur2Ac(oyl-L-Ala-gamma-D-Glu-L-Lys-D-Ala-D-Ala)](n)-di-trans,octa-cis-undecaprenyl diphosphate + beta-D-GlcNAc-(1-&gt;4)-Mur2Ac(oyl-L-Ala-gamma-D-Glu-L-Lys-D-Ala-D-Ala)-di-trans,octa-cis-undecaprenyl diphosphate = [GlcNAc-(1-&gt;4)-Mur2Ac(oyl-L-Ala-gamma-D-Glu-L-Lys-D-Ala-D-Ala)](n+1)-di-trans,octa-cis-undecaprenyl diphosphate + di-trans,octa-cis-undecaprenyl diphosphate + H(+). Its pathway is cell wall biogenesis; peptidoglycan biosynthesis. Peptidoglycan polymerase that catalyzes glycan chain elongation using lipid-linked disaccharide-pentapeptide as the substrate. This is Monofunctional glycosyltransferase from Staphylococcus aureus (strain JH1).